The sequence spans 38 residues: Large ribosomal subunit protein bL36 (38 aa).

Belongs to the bacterial ribosomal protein bL36 family.

The polypeptide is Large ribosomal subunit protein bL36 (Aster yellows witches'-broom phytoplasma (strain AYWB)).